We begin with the raw amino-acid sequence, 308 residues long: Spermidine synthase 1 (308 aa).

The PABS domain occupies 17–254; the sequence is PGWFSEISPL…GVIGFMLCST (238 aa). Residue Gln48 participates in S-adenosyl 3-(methylsulfanyl)propylamine binding. Tyr78 contacts putrescine. Residues Gln79, Asp103, Glu123, 154–155, and Asp173 each bind S-adenosyl 3-(methylsulfanyl)propylamine; that span reads DG. Asp173 functions as the Proton acceptor in the catalytic mechanism. Residues 173 to 176 and Tyr242 each bind putrescine; that span reads DSSD.

This sequence belongs to the spermidine/spermine synthase family.

The catalysed reaction is S-adenosyl 3-(methylsulfanyl)propylamine + putrescine = S-methyl-5'-thioadenosine + spermidine + H(+). Its pathway is amine and polyamine biosynthesis; spermidine biosynthesis; spermidine from putrescine: step 1/1. This Datura stramonium (Jimsonweed) protein is Spermidine synthase 1.